The sequence spans 600 residues: Probable tripeptidyl-peptidase SED4 (600 aa).

Residues 1 to 22 (MVSFTLRAIGACLIGLPALITA) form the signal peptide. A propeptide spans 23–202 (APTSHVSNGF…SVFTSDLEMT (180 aa)) (removed in mature form). 2 N-linked (GlcNAc...) asparagine glycosylation sites follow: asparagine 210 and asparagine 281. The Peptidase S53 domain occupies 212–600 (TITPDCIREL…FEKLSKLVLI (389 aa)). Active-site charge relay system residues include glutamate 288 and aspartate 292. N-linked (GlcNAc...) asparagine glycans are attached at residues asparagine 323 and asparagine 404. The Charge relay system role is filled by serine 504. Positions 546, 547, 579, and 581 each coordinate Ca(2+).

It depends on Ca(2+) as a cofactor.

Its subcellular location is the secreted. It localises to the extracellular space. It carries out the reaction Release of an N-terminal tripeptide from a polypeptide.. Secreted tripeptidyl-peptidase which degrades proteins at acidic pHs and is involved in virulence. The polypeptide is Probable tripeptidyl-peptidase SED4 (SED4) (Trichophyton verrucosum (strain HKI 0517)).